A 31-amino-acid polypeptide reads, in one-letter code: MLTLTSYFGFLLAALTITSALFIGLNKIRLI.

Residues 4–26 (LTSYFGFLLAALTITSALFIGLN) form a helical membrane-spanning segment.

It belongs to the PetL family. The 4 large subunits of the cytochrome b6-f complex are cytochrome b6, subunit IV (17 kDa polypeptide, PetD), cytochrome f and the Rieske protein, while the 4 small subunits are PetG, PetL, PetM and PetN. The complex functions as a dimer.

The protein resides in the plastid. Its subcellular location is the chloroplast thylakoid membrane. In terms of biological role, component of the cytochrome b6-f complex, which mediates electron transfer between photosystem II (PSII) and photosystem I (PSI), cyclic electron flow around PSI, and state transitions. PetL is important for photoautotrophic growth as well as for electron transfer efficiency and stability of the cytochrome b6-f complex. The protein is Cytochrome b6-f complex subunit 6 of Amaranthus caudatus (Love-lies-bleeding).